The sequence spans 1062 residues: Inactive tyrosine-protein kinase 7 (1062 aa).

Positions 1-22 are cleaved as a signal peptide; sequence MGARPLTLLRALLLPLLAGAQA. Ig-like C2-type domains follow at residues 23 to 112, 120 to 210, 217 to 309, 301 to 399, 404 to 489, 495 to 578, and 570 to 672; these read AIVF…ASFN, PVVL…FTLS, ARVV…EATL, PPIV…VNIT, PTWL…ARVQ, KFTP…HVQL, and GQIR…APLL. The Extracellular portion of the chain corresponds to 23-696; it reads AIVFIKEPSS…SPPPYKMIQT (674 aa). Cysteine 45 and cysteine 93 are joined by a disulfide. Residues asparagine 98, asparagine 108, asparagine 176, asparagine 206, asparagine 260, and asparagine 275 are each glycosylated (N-linked (GlcNAc...) asparagine). The cysteines at positions 142 and 192 are disulfide-linked. Disulfide bonds link cysteine 238–cysteine 293 and cysteine 335–cysteine 383. 4 N-linked (GlcNAc...) asparagine glycosylation sites follow: asparagine 397, asparagine 455, asparagine 559, and asparagine 638. Intrachain disulfides connect cysteine 425–cysteine 473, cysteine 516–cysteine 562, and cysteine 605–cysteine 656. A helical membrane pass occupies residues 697–717; sequence IGLSVGAAVAYIIAVLGLMFY. Residues 718–1062 lie on the Cytoplasmic side of the membrane; it reads CKKRCKAKRL…LGDSPADSKQ (345 aa). 2 disordered regions span residues 728–750 and 1039–1062; these read QKQPEGEEPEMECLNGGPLQNGQ and NPKDRPSFSEIASTLGDSPADSKQ. Residues 786–1062 form an interaction with CTNNB1 region; sequence ASLQPITTLG…LGDSPADSKQ (277 aa). The 271-residue stretch at 788 to 1058 folds into the Protein kinase; inactive domain; that stretch reads LQPITTLGKS…IASTLGDSPA (271 aa). Phosphoserine is present on serine 1056.

This sequence belongs to the protein kinase superfamily. Tyr protein kinase family. Insulin receptor subfamily. Interacts with CTNNB1. Post-translationally, MMP14 cleaves PTK7 between Pro-613 and Leu-614 generating an N-terminal soluble (70 kDa) fragment and a membrane C-terminal (50 kDa) fragment. Proteolysis by MMP14 regulates PTK7 function in non-canonical Wnt signaling pathway. Expressed at high levels in lung and un-pregnant uterus among adult tissues, and in the tail, limbs, somites, gut and craniofacial regions among embryonic tissues.

The protein localises to the membrane. It localises to the cell junction. Its function is as follows. Inactive tyrosine kinase involved in Wnt signaling pathway. Component of both the non-canonical (also known as the Wnt/planar cell polarity signaling) and the canonical Wnt signaling pathway. Functions in cell adhesion, cell migration, cell polarity, proliferation, actin cytoskeleton reorganization and apoptosis. Has a role in embryogenesis, epithelial tissue organization and angiogenesis. This is Inactive tyrosine-protein kinase 7 (Ptk7) from Mus musculus (Mouse).